Here is a 92-residue protein sequence, read N- to C-terminus: Small ribosomal subunit protein uS19c (92 aa).

Belongs to the universal ribosomal protein uS19 family.

It localises to the plastid. It is found in the chloroplast. Functionally, protein S19 forms a complex with S13 that binds strongly to the 16S ribosomal RNA. The polypeptide is Small ribosomal subunit protein uS19c (Gracilaria tenuistipitata var. liui (Red alga)).